A 376-amino-acid polypeptide reads, in one-letter code: Protein FAM199X (376 aa).

Residues 237–253 are compositionally biased toward basic and acidic residues; that stretch reads YIKEHSPRQRSTRESWK. Positions 237-350 are disordered; that stretch reads YIKEHSPRQR…QRQARKERLS (114 aa). Positions 255–300 are enriched in low complexity; that stretch reads TSYSTASTSGVSGASVSSSSASMVSTASSTGSSGGNSASNSSANMS. The segment covering 318 to 337 has biased composition (basic residues); sequence DSKKRSKQRKLQQKALRKRQ. Residues 320–349 adopt a coiled-coil conformation; the sequence is KKRSKQRKLQQKALRKRQLKEQRQARKERL. The span at 338 to 349 shows a compositional bias: basic and acidic residues; it reads LKEQRQARKERL.

It belongs to the FAM199 family.

The protein is Protein FAM199X (fam199x) of Xenopus tropicalis (Western clawed frog).